Consider the following 4493-residue polypeptide: Mucin-17 (4493 aa).

Positions 1–25 are cleaved as a signal peptide; it reads MPRPGTMALCLLTLVLSLLPPQAAA. At 26–4393 the chain is on the extracellular side; that stretch reads EQDLSVNRAV…QGTQKSLVYG (4368 aa). Positions 88-105 are enriched in polar residues; that stretch reads NPEMTSIESSVTSDTPGV. 4 disordered regions span residues 88-159, 188-223, 248-277, and 306-344; these read NPEM…SISS, LTTSTQASSSPTTPESTTIPKSTNSEGSTPLTSMPA, TISAQASSSPTTAEGPSLSNSAPSGGSTPL, and VITSTEASSSPTTAEGTSIPTSTYTEGSTPLTSTPASTM. Low complexity predominate over residues 106–146; that stretch reads SSTRMTPTESRTTSESTSDSTTLFPSSTEDTSSPTTPEGTD. The span at 148–159 shows a compositional bias: polar residues; the sequence is PMSTPSEESISS. Repeat copies occupy residues 185-245, 246-300, 301-361, 362-418, 420-477, 479-538, 539-597, 598-654, 656-715, 716-774, 775-831, 833-892, 893-951, 952-1010, 1011-1069, 1070-1121, 1122-1187, 1188-1246, 1247-1305, 1306-1364, 1365-1423, 1424-1482, 1483-1541, 1542-1600, 1601-1656, 1658-1717, 1718-1776, 1777-1835, 1836-1895, 1896-1951, 1953-2012, 2013-2071, 2072-2127, 2129-2188, 2189-2247, 2248-2306, 2307-2365, 2366-2424, 2425-2483, 2484-2540, 2542-2601, 2602-2653, 2654-2719, 2720-2770, 2772-2837, 2838-2896, 2897-2955, 2956-3014, 3015-3073, 3074-3132, 3133-3191, 3192-3247, 3249-3308, 3309-3367, 3368-3426, 3427-3485, and 3486-3544. Residues 185–3727 are 59 X approximate tandem repeats; sequence STPLTTSTQA…SVVTSTPVTT (3543 aa). The span at 188 to 210 shows a compositional bias: low complexity; sequence LTTSTQASSSPTTPESTTIPKST. Polar residues predominate over residues 211–223; that stretch reads NSEGSTPLTSMPA. The span at 308–323 shows a compositional bias: low complexity; the sequence is TSTEASSSPTTAEGTS. The span at 324 to 344 shows a compositional bias: polar residues; that stretch reads IPTSTYTEGSTPLTSTPASTM. Low complexity predominate over residues 425–441; that stretch reads TTASEASSSPTTAEDTS. 6 disordered regions span residues 425 to 629, 644 to 868, 886 to 1104, 1116 to 1163, 1175 to 1279, and 1296 to 1338; these read TTAS…ERGT, SEAS…TPLT, STTP…TPLT, SEAS…TPLA, SEAN…GSTL, and STLL…GRTP. Positions 442-483 are enriched in polar residues; the sequence is IATSTPSEGSTPLTSMPVSTTPVASSEASNLSTTPVDSKTQV. Asparagine 471 carries an N-linked (GlcNAc...) asparagine glycan. A compositionally biased stretch (low complexity) spans 484–497; that stretch reads TTSTEASSSPPTAE. Polar residues predominate over residues 498–528; the sequence is VNSMPTSTPSEGSTPLTSMSVSTMPVASSEA. Low complexity-rich tracts occupy residues 529 to 573 and 584 to 618; these read STLS…TPLT and SSEASTTSTTPADSNTFVTTSSEASSSSTTAEGTS. Polar residues-rich tracts occupy residues 619-629 and 644-660; these read MPTSTYSERGT and SEASTLSTTPVDSNTPV. Residues 661–677 show a composition bias toward low complexity; that stretch reads TTSTEATSSSTTAEGTS. Polar residues predominate over residues 678-705; the sequence is MPTSTYTEGSTPLTSMPVNTTLVASSEA. The N-linked (GlcNAc...) asparagine glycan is linked to asparagine 696. The span at 706-733 shows a compositional bias: low complexity; the sequence is STLSTTPVDTSTPVTTSTEASSSPTTAD. The span at 737-754 shows a compositional bias: polar residues; sequence MPTSTPSEGSTPLTSMPV. The span at 755–776 shows a compositional bias: low complexity; sequence SKTLLTSSEASTLSTTPLDTST. The segment covering 777–832 has biased composition (polar residues); sequence HITTSTEASCSPTTTEGTSMPISTPSEGSPLLTSIPVSITPVTSPEASTLSTTPVD. Low complexity predominate over residues 833-849; sequence SNSPVTTSTEVSSSPTP. Polar residues predominate over residues 854–868; the sequence is SMPTSTYSEGRTPLT. The span at 886–900 shows a compositional bias: low complexity; that stretch reads STTPVDTSTPVTNST. Asparagine 898 carries N-linked (GlcNAc...) asparagine glycosylation. Polar residues predominate over residues 901–944; the sequence is EARSSPTTSEGTSMPTSTPGEGSTPLTSMPDSTTPVVSSEARTL. Residues 945–972 show a composition bias toward low complexity; it reads SATPVDTSTPVTTSTEATSSPTTAEGTS. A compositionally biased stretch (polar residues) spans 973–1011; sequence IPTSTPSEGTTPLTSTPVSHTLVANSEASTLSTTPVDSN. Low complexity predominate over residues 1012–1021; the sequence is TPLTTSTEAS. Polar residues predominate over residues 1029–1062; sequence GTSMPTSTPSEGSTPLTRMPVSTTMVASSETSTL. The span at 1063 to 1090 shows a compositional bias: low complexity; sequence STTPADTSTPVTTYSQASSSSTTADGTS. 2 stretches are compositionally biased toward polar residues: residues 1091 to 1104 and 1116 to 1132; these read MPTSTYSEGSTPLT and SEASTLSTTPVDTSIPV. The segment covering 1133-1149 has biased composition (low complexity); the sequence is TTSTEASSSPTTAEGTS. Composition is skewed to polar residues over residues 1175–1198 and 1205–1222; these read SEANTLSTTPVDSKTQVATSTEAS and EVTSMPTSTPGERSTPLT. Residues 1237–1279 show a composition bias toward low complexity; that stretch reads STLSTSPVDTSTPVTTSAETSSSPTTAEGTSLPTSTTSEGSTL. Polar residues-rich tracts occupy residues 1310–1320 and 1326–1338; these read VTSNEVSSSPT and SMPTSTYSEGRTP. N-linked (GlcNAc...) asparagine glycosylation is present at asparagine 1345. The span at 1360–1394 shows a compositional bias: polar residues; it reads TPVDNSTPVTTSTEACSSPTTSEGTSMPNSNPSEG. Disordered stretches follow at residues 1360-1516, 1537-1575, 1590-1930, 1947-2163, 2177-2281, 2295-2501, 2524-2630, 2647-2693, 2709-2751, 2765-2853, 2879-2925, 2942-3167, 3182-3577, 3589-3635, 3667-3701, 3785-3812, 3829-3849, 3892-3914, 3965-3988, and 4008-4129; these read TPVD…STAL, TPAVTSTPVTTYSQASSSPTTADGTSMQTSTYSEGSTPL, ANTL…PLTS, STTL…RTPL, AIST…TTPL, EVST…TTAE, TTPV…TPSE, SSEA…RSTP, ASTL…DGST, SSEA…SPTT, TPVA…TPSE, GSEA…TPLT, STLS…GSSS, TSSE…EVST, ITSTQVSSSPVTPEGTTMPIWTPSEGSTPLTTMPV, MTTASEGSSSPTTLEGTTTMPMSTTSER, PSEASTLSTPPGDTSTPLLTS, ASIASTPPLDTSTTFTPSTDTAS, VITSTELNTPSTSSSSTTTSFSTT, and STAP…TPTV. Composition is skewed to low complexity over residues 1395-1415 and 1423-1442; these read TTPLTSIPVSTTPVVSSEAST and TSTPGTTSAEATSSPTTAEG. Residues 1461 to 1483 show a composition bias toward polar residues; it reads PVSNTPVANSEASTLSTTPVDSN. Over residues 1484-1499 the composition is skewed to low complexity; it reads SPVVTSTAVSSSPTPA. Residues 1504–1516 are compositionally biased toward polar residues; sequence IAISTPSEGSTAL. Low complexity predominate over residues 1537 to 1547; that stretch reads TPAVTSTPVTT. Polar residues-rich tracts occupy residues 1548 to 1575 and 1590 to 1604; these read YSQASSSPTTADGTSMQTSTYSEGSTPL and ANTLSTTPIDSKTQV. Low complexity predominate over residues 1605–1620; it reads TASTEASSSTTAEGSS. Polar residues-rich tracts occupy residues 1621 to 1673 and 1679 to 1775; these read MTIS…SSPT and SMPT…TPID. Over residues 1776 to 1797 the composition is skewed to low complexity; sequence TSTPVTTSTEATSSPTTAEGTS. Polar residues predominate over residues 1798–1836; it reads IPTSTLSEGMTPLTSTPVSHTLVANSEASTLSTTPVDSN. Residues 1837-1852 show a composition bias toward low complexity; the sequence is SPVVTSTAVSSSPTPA. A compositionally biased stretch (polar residues) spans 1856–1883; it reads SIATSTPSEGSTALTSIPVSTTTVASSE. The span at 1884-1900 shows a compositional bias: low complexity; it reads TNTLSTTPAVTSTPVTT. Composition is skewed to polar residues over residues 1901-1921 and 1947-1976; these read YAQVSSSPTTADGSSMPTSTP and STTLADTRTPVTTYSQASSSPTTADGTSMP. Residues 1984-2033 show a composition bias toward low complexity; it reads STPLTSMPLSTTLVVSSEASTLSTTPVDTSTPATTSTEGSSSPTTAGGTS. 2 stretches are compositionally biased toward polar residues: residues 2034–2043 and 2051–2077; these read IQTSTPSERT and VSTTLVVSSEGNTLSTTPVDSKTQVTN. A glycan (N-linked (GlcNAc...) asparagine) is linked at asparagine 2077. Low complexity predominate over residues 2078–2091; sequence STEASSSATAEGSS. The span at 2092–2156 shows a compositional bias: polar residues; it reads MTISAPSEGS…EGTSMQTSTY (65 aa). Low complexity predominate over residues 2177-2196; that stretch reads AISTLSTTPVDTSTPVTNST. N-linked (GlcNAc...) asparagine glycosylation occurs at asparagine 2194. Polar residues predominate over residues 2197–2240; sequence EARSSPTTSEGTSMPTSTPSEGSTPFTSMPVSTMPVVTSEASTL. Low complexity predominate over residues 2241–2268; sequence SATPVDTSTPVTTSTEATSSPTTAEGTS. Composition is skewed to polar residues over residues 2269 to 2281 and 2295 to 2307; these read IPTSTLSEGTTPL and EVSTLSTTPVDSN. Over residues 2308–2317 the composition is skewed to low complexity; that stretch reads TPFTTSTEAS. A compositionally biased stretch (polar residues) spans 2325-2358; the sequence is GTSMPTSTSSEGNTPLTRMPVSTTMVASFETSTL. Over residues 2359-2371 the composition is skewed to low complexity; that stretch reads STTPADTSTPVTT. Over residues 2372 to 2395 the composition is skewed to polar residues; the sequence is YSQAGSSPTTADDTSMPTSTYSEG. Composition is skewed to low complexity over residues 2396–2445 and 2462–2499; these read STPL…EGTS and PVSTTPVVSSEAGTLSTTPVDTSTPMTTSTEASSSPTT. Residues 2524-2547 are compositionally biased toward polar residues; it reads TTPVASPEASTLSTTPVDSNSPVV. Over residues 2548-2563 the composition is skewed to low complexity; that stretch reads TSTEISSSATSAEGTS. Polar residues predominate over residues 2564–2576; sequence MPTSTYSEGSTPL. Residues 2586–2617 show a composition bias toward low complexity; that stretch reads LASSEASTLSTTPVDTSIPVTTSTETSSSPTT. Positions 2618-2628 are enriched in polar residues; the sequence is AKDTSMPISTP. Residues 2654 to 2681 show a composition bias toward low complexity; it reads STTPVDTRTLVTTSTGTSSSPTTAEGSS. The segment covering 2682 to 2693 has biased composition (polar residues); sequence MPTSTPGERSTP. Residues 2710–2740 show a composition bias toward low complexity; that stretch reads STLSTTPVDTSTPVTTSAEASSSPTTAEGTS. A compositionally biased stretch (polar residues) spans 2741 to 2751; that stretch reads MRISTPSDGST. 2 stretches are compositionally biased toward low complexity: residues 2765–2816 and 2829–2853; these read SSEA…TSMP and TLSTTPVDTSTPVTTSTKASSSPTT. The span at 2879–2900 shows a compositional bias: polar residues; it reads TPVASSEASTLSTTPVDTSIPV. 2 stretches are compositionally biased toward low complexity: residues 2901-2917 and 2950-2976; these read TTSTEGSSSPTTAEGTS and TTPVDTRTPVTTSAEASSSPTTAEGTS. Polar residues predominate over residues 2988–3009; that stretch reads PLTSMSVSTMPVASSEASTLSR. The span at 3010–3031 shows a compositional bias: low complexity; the sequence is TPADTSTPVTTSTEASSSPTTA. Positions 3037–3057 are enriched in polar residues; the sequence is PISTPSEGSTPLTSIPVSTTP. Composition is skewed to low complexity over residues 3073 to 3089 and 3104 to 3140; these read SNSPVVTSTEVSSSPTP and STPLTGVPVSTTPVTSSAISTLSTTPVDTSTPVTTST. The span at 3141-3166 shows a compositional bias: polar residues; it reads EAHSSPTTSEGTSMPTSTPSEGSTPL. Residues 3185 to 3211 are compositionally biased toward low complexity; that stretch reads SATPVDTSTPVTTSTEATSSTTAEGTS. The span at 3212–3253 shows a compositional bias: polar residues; sequence IPTSTPSEGMTPLTSVPVSNTPVASSEASILSTTPVDSNTPL. Over residues 3254-3267 the composition is skewed to low complexity; sequence TTSTEASSSPPTAE. Over residues 3268-3288 the composition is skewed to polar residues; sequence GTSMPTSTPSEGSTPLTSMPV. A compositionally biased stretch (low complexity) spans 3289-3314; that stretch reads STTTVASSETSTLSTTPADTSTPVTT. The segment covering 3329–3357 has biased composition (polar residues); sequence SMPTSTYSEGSTPLTNMSFSTTPVVSSEA. An N-linked (GlcNAc...) asparagine glycan is attached at asparagine 3344. Low complexity predominate over residues 3358 to 3375; sequence STLSTTPVDTSTPVTTST. A compositionally biased stretch (polar residues) spans 3376-3401; sequence EASLSPTTAEGTSIPTSSPSEGTTPL. Positions 3405–3414 are enriched in low complexity; sequence PVSTTPVVSS. Composition is skewed to polar residues over residues 3415 to 3441 and 3447 to 3475; these read EVNTLSTTPVDSNTLVTTSTEASSSPT and SLPTSTTSEGSTPLSIMPLSTTPVASSEA. Low complexity predominate over residues 3476–3501; sequence STLSTTPVDTSTPVTTSSPTNSSPTT. 2 stretches are compositionally biased toward polar residues: residues 3502–3549 and 3558–3571; these read AEVT…TFVT and PATLQVTTMRMSTP. Low complexity predominate over residues 3589-3616; the sequence is TSSEASTPSTPSVDRSTPVTTSTQSNST. Tandem repeats lie at residues 3604–3662 and 3663–3727. Residues 3626 to 3635 are compositionally biased toward polar residues; that stretch reads PMSTPSEVST. The span at 3667–3679 shows a compositional bias: low complexity; it reads ITSTQVSSSPVTP. Polar residues-rich tracts occupy residues 3690–3701 and 3785–3806; these read SEGSTPLTTMPV and MTTASEGSSSPTTLEGTTTMPM. 3 stretches are compositionally biased toward low complexity: residues 3967–3988, 4008–4083, and 4090–4129; these read TSTELNTPSTSSSSTTTSFSTT, STAP…SSTT, and TTMTTRTKPSTRTTSFPTVTTTAVPTNTTIKSNPTSTPTV. Asparagine 4116 carries N-linked (GlcNAc...) asparagine glycosylation. One can recognise an EGF-like domain in the interval 4131 to 4170; that stretch reads RTTTCFGDGCQNTASRCKNGGTWDGLKCQCPNLYYGELCE. 3 disulfide bridges follow: cysteine 4135–cysteine 4147, cysteine 4140–cysteine 4158, and cysteine 4160–cysteine 4169. The 108-residue stretch at 4184 to 4291 folds into the SEA domain; that stretch reads ISAQMELTVT…QQIMINDICS (108 aa). 5 N-linked (GlcNAc...) asparagine glycosylation sites follow: asparagine 4205, asparagine 4236, asparagine 4267, asparagine 4297, and asparagine 4305. Residues 4394–4414 traverse the membrane as a helical segment; that stretch reads LVGAGVVLMLIILVALLMLVF. The Cytoplasmic segment spans residues 4415–4493; it reads RSKREVKRQK…QRPQVMTTSF (79 aa).

Interacts via its C-terminus with PDZK1 and this interaction appears important for proper localization. Probably cleaved within the SEA domain. Post-translationally, N-glycosylated. Contains high mannose and complex-type glycans. The forms containing the complex type glycans localize to the cell surface. Not O-glycosylated. As to expression, expressed almost exclusively in the intestine. Expression is especially high in both the duodenum and transverse colon. Expressed in mature absorptive cells of the small intestinal villi. No expression is detected in goblet cells. Highly expressed in pancreatic adenocarcinoma tissue (at protein level). Expression is not detectable in normal pancreas, in pancreatitis or in cell lines derived from other cancers.

It localises to the cell membrane. The protein localises to the secreted. Functionally, probably plays a role in maintaining homeostasis on mucosal surfaces. The protein is Mucin-17 (MUC17) of Homo sapiens (Human).